Reading from the N-terminus, the 382-residue chain is Gap junction alpha-1 protein (382 aa).

The Cytoplasmic portion of the chain corresponds to Gly-2–Lys-23. Ser-5 is subject to Phosphoserine. Residues Val-24–Ala-44 traverse the membrane as a helical segment. The Extracellular segment spans residues Trp-45–Arg-76. Disulfide bonds link Cys-54–Cys-192 and Cys-187–Cys-198. Residues Phe-77–Phe-97 form a helical membrane-spanning segment. Residues Tyr-98–Tyr-155 are Cytoplasmic-facing. Residue Lys-144 forms a Glycyl lysine isopeptide (Lys-Gly) (interchain with G-Cter in SUMO) linkage. Residues Ile-156–Ile-176 form a helical membrane-spanning segment. Over Tyr-177–Thr-207 the chain is Extracellular. The helical transmembrane segment at Ile-208 to Leu-228 threads the bilayer. The Cytoplasmic segment spans residues Phe-229–Ile-382. Lys-237 is covalently cross-linked (Glycyl lysine isopeptide (Lys-Gly) (interchain with G-Cter in SUMO)). The interaction with NOV stretch occupies residues Ser-244–Ile-382. At Tyr-247 the chain carries Phosphotyrosine. 2 positions are modified to phosphoserine: Ser-255 and Ser-262. Residues Lys-264–Ile-382 are interaction with UBQLN4. The residue at position 271 (Cys-271) is an S-nitrosocysteine. Thr-275 bears the Phosphothreonine mark. Residues Ser-306 and Ser-314 each carry the phosphoserine modification. Residues Gln-317–Ala-332 are compositionally biased toward polar residues. The tract at residues Gln-317–Ile-382 is disordered. Phosphoserine; by CK1 is present on Ser-325. Thr-326 carries the post-translational modification Phosphothreonine. Residues Ser-328 and Ser-330 each carry the phosphoserine; by CK1 modification. A phosphoserine mark is found at Ser-344 and Ser-365. Low complexity predominate over residues Arg-362 to Arg-374. Residue Ser-368 is modified to Phosphoserine; by PKC/PRKCG and PKC/PRKCD. Residues Ser-369 and Ser-373 each carry the phosphoserine modification.

The protein belongs to the connexin family. Alpha-type (group II) subfamily. A connexon is composed of a hexamer of connexins. Interacts with SGSM3. Interacts with RIC1/CIP150. Interacts with CNST and CSNK1D. Interacts (via C-terminus) with TJP1. Interacts (via C-terminus) with SRC (via SH3 domain). Interacts (not ubiquitinated) with UBQLN4 (via UBA domain). Interacts with NOV. Interacts with TMEM65. Interacts with ANK3/ANKG and PKP2. In terms of processing, phosphorylation at Ser-325, Ser-328 and Ser-330 by CK1 modulates gap junction assembly. Phosphorylated at Ser-368 by PRKCG; phosphorylation induces disassembly of gap junction plaques and inhibition of gap junction activity. Phosphorylation at Ser-368 by PRKCD triggers its internalization into small vesicles leading to proteasome-mediated degradation. Post-translationally, sumoylated with SUMO1, SUMO2 and SUMO3, which may regulate the level of functional Cx43 gap junctions at the plasma membrane. May be desumoylated by SENP1 or SENP2. S-nitrosylation at Cys-271 is enriched at the muscle endothelial gap junction in arteries, it augments channel permeability and may regulate of smooth muscle cell to endothelial cell communication. In terms of processing, acetylated in the developing cortex; leading to delocalization from the cell membrane.

The protein resides in the cell membrane. It localises to the cell junction. Its subcellular location is the gap junction. It is found in the endoplasmic reticulum. Gap junction protein that acts as a regulator of bladder capacity. A gap junction consists of a cluster of closely packed pairs of transmembrane channels, the connexons, through which materials of low MW diffuse from one cell to a neighboring cell. May play a critical role in the physiology of hearing by participating in the recycling of potassium to the cochlear endolymph. Negative regulator of bladder functional capacity: acts by enhancing intercellular electrical and chemical transmission, thus sensitizing bladder muscles to cholinergic neural stimuli and causing them to contract. May play a role in cell growth inhibition through the regulation of NOV expression and localization. Plays an essential role in gap junction communication in the ventricles. This is Gap junction alpha-1 protein (GJA1) from Chlorocebus aethiops (Green monkey).